The primary structure comprises 480 residues: Cysteine--tRNA ligase (480 aa).

Cysteine 29 provides a ligand contact to Zn(2+). The short motif at 31-41 is the 'HIGH' region element; sequence PTVYSDPHLGH. Zn(2+)-binding residues include cysteine 220, histidine 245, and glutamate 249. Residues 276–280 carry the 'KMSKS' region motif; that stretch reads KMAKS. Lysine 279 contacts ATP.

This sequence belongs to the class-I aminoacyl-tRNA synthetase family. Monomer. Zn(2+) serves as cofactor.

It is found in the cytoplasm. The enzyme catalyses tRNA(Cys) + L-cysteine + ATP = L-cysteinyl-tRNA(Cys) + AMP + diphosphate. This chain is Cysteine--tRNA ligase, found in Thermus thermophilus (strain ATCC BAA-163 / DSM 7039 / HB27).